A 92-amino-acid polypeptide reads, in one-letter code: Auxin-responsive protein SAUR28 (92 aa).

The protein belongs to the ARG7 family. As to expression, higher expression in thermo-responsive cultivars (e.g. cv. Alst-1, cv. Ang-0 and cv. Com-0) than in low thermo-responsive cultivars (e.g. cv. Dja-1, cv. El-0 and cv. Kon).

It localises to the cell membrane. In terms of biological role, functions as a positive effector of cell expansion through modulation of auxin transport. Involved in thermo-responsiveness of plant architecture. Enhances plasma membrane H(+)-ATPase. The sequence is that of Auxin-responsive protein SAUR28 from Arabidopsis thaliana (Mouse-ear cress).